Reading from the N-terminus, the 661-residue chain is MTETVLNQGYGYGIVIGLGFAFAIVMILVTYVLKRYVGEVQDSEHFTTASRSVKTGLISSAVVSSWTWPGTLLTSAGMAYEYGVCGSMWYSFAFTVQITFFTVIALQVKRVAPGAHTIVEIVKARFGQASHAVFLFYALGTNIIVSAMLLLGGSQAISAITGMHVVAAGFLLPLGVWLYTVSGGLKSTFLSDWTHTVIVYIVILITLFVAYTSSVHIGSIDKMYDLLTEVSKTNPSTGYKGSYLTVTNRDAVFVGWNIVIGGFATVFCDPSYGQKAIAAKPISAMKGYFAGGLAWLIVPWAMGSAAALSCLALTNNPVSVTYPDPVSSKQVSEGMPLLYGMTALMGKNGAAAGVLILFMASTSATSAELVAFSSVMTYDVYRNYFRPNASGKELVRVTHVFVTIFAVCMGALAVLFNYIGITISWIITFIGIALGPAVFGITLTLFWKKMNKYGMIIGCPMGSITGVVCWVGSCYKFSNGVVNKTTLNTPYANAVGNFTGLFSGLIYIVLISYFFPNKSDDLNNLNEKFVLGDDATAEEIVDAETEKKQLDRSLRIGIFVSWIIFFILVIIVPLPMYGSKYIFSKLFFRGWIIVIIIWTLIAALYITFYPLYESRDTIVYLCKLAIGKAKAPEPMNYVDAVEVEIESLSDDDKEKKANDFL.

15 helical membrane-spanning segments follow: residues 13–33 (GIVI…TYVL), 56–76 (GLIS…LTSA), 86–106 (GSMW…VIAL), 132–152 (AVFL…LLLG), 165–185 (VVAA…SGGL), 197–217 (VIVY…SVHI), 251–271 (AVFV…CDPS), 288–308 (YFAG…AAAL), 352–372 (AGVL…LVAF), 397–417 (VTHV…VLFN), 419–439 (IGIT…PAVF), 454–474 (GMII…VGSC), 495–515 (VGNF…SYFF), 556–576 (IGIF…PLPM), and 591–611 (WIIV…FYPL).

This sequence belongs to the sodium:solute symporter (SSF) (TC 2.A.21) family.

It is found in the membrane. Its subcellular location is the golgi apparatus membrane. Involved in active transport of urea. This Schizosaccharomyces pombe (strain 972 / ATCC 24843) (Fission yeast) protein is Probable urea active transporter 3 (dur3-3).